A 472-amino-acid polypeptide reads, in one-letter code: MSAHGTNEGALWGGRFESGPAAAMAALSKSTHFDWVLAPYDVRASQAHARVLHKAGLLGDEDLATMLDGLGRLAADVASGDFIPSESDEDVHGALERGLIDRVGPDVGGRLRAGRSRNDQVATLFRMWLRDAVRRVAEGVLDIVDALATQAAAHPSAVMPGKTHLQAAQPVLLAHHLLAHTHPLLRDVQRLRDFDVRAAVSPYGSGALAGSSLGLDPEAIAAELAFDSSAENSIDATSSRDFAAEAAFVLAMIGVDLSRMAEEVILWSTPEFGYITLADAWSTGSSIMPQKKNPDVSELTRGKSGRLIGNLTGLLATLKAQPLAYNRDLQEDKEPVFDSVAQLELLLPAITGLVATLEFHTDRMAELAPAGFTLATDIAEWLVRQGVPFRVAHEAAGACVRVAEARGAGLEDLTDEELAGVDPALTPDVREVLTVEGSIASRNARGGTAGIRVAEQLGGVRQLSESLREWCR.

It belongs to the lyase 1 family. Argininosuccinate lyase subfamily.

The protein resides in the cytoplasm. It carries out the reaction 2-(N(omega)-L-arginino)succinate = fumarate + L-arginine. It functions in the pathway amino-acid biosynthesis; L-arginine biosynthesis; L-arginine from L-ornithine and carbamoyl phosphate: step 3/3. This chain is Argininosuccinate lyase, found in Rhodococcus opacus (strain B4).